Reading from the N-terminus, the 428-residue chain is Glutamyl-tRNA reductase (428 aa).

Residues 55–58, S114, 119–121, and Q125 contribute to the substrate site; these read TCNR and ETQ. C56 (nucleophile) is an active-site residue. Residue 194–199 coordinates NADP(+); the sequence is GAGEMI.

It belongs to the glutamyl-tRNA reductase family. In terms of assembly, homodimer.

It catalyses the reaction (S)-4-amino-5-oxopentanoate + tRNA(Glu) + NADP(+) = L-glutamyl-tRNA(Glu) + NADPH + H(+). It functions in the pathway porphyrin-containing compound metabolism; protoporphyrin-IX biosynthesis; 5-aminolevulinate from L-glutamyl-tRNA(Glu): step 1/2. Functionally, catalyzes the NADPH-dependent reduction of glutamyl-tRNA(Glu) to glutamate 1-semialdehyde (GSA). The protein is Glutamyl-tRNA reductase of Paraburkholderia phytofirmans (strain DSM 17436 / LMG 22146 / PsJN) (Burkholderia phytofirmans).